Consider the following 397-residue polypeptide: Serpin-Z7 (397 aa).

An N-acetylalanine modification is found at alanine 2. Residues 344–368 form an RCL region; that stretch reads GTKAGAATGDVIVDRSLPIRMDFVA.

This sequence belongs to the serpin family. Highly expressed in endosperm, at intermediate level in embryo and at lower levels in roots.

Inhibits chymotrypsin in vitro. The chain is Serpin-Z7 (PAZ7) from Hordeum vulgare (Barley).